The chain runs to 209 residues: FMN-dependent NADH:quinone oxidoreductase (209 aa).

FMN contacts are provided by residues Ser10, 16–18 (SHS), and 98–101 (MWNF).

It belongs to the azoreductase type 1 family. In terms of assembly, homodimer. It depends on FMN as a cofactor.

The enzyme catalyses 2 a quinone + NADH + H(+) = 2 a 1,4-benzosemiquinone + NAD(+). It catalyses the reaction N,N-dimethyl-1,4-phenylenediamine + anthranilate + 2 NAD(+) = 2-(4-dimethylaminophenyl)diazenylbenzoate + 2 NADH + 2 H(+). Functionally, quinone reductase that provides resistance to thiol-specific stress caused by electrophilic quinones. Also exhibits azoreductase activity. Catalyzes the reductive cleavage of the azo bond in aromatic azo compounds to the corresponding amines. The chain is FMN-dependent NADH:quinone oxidoreductase from Nitratidesulfovibrio vulgaris (strain ATCC 29579 / DSM 644 / CCUG 34227 / NCIMB 8303 / VKM B-1760 / Hildenborough) (Desulfovibrio vulgaris).